The chain runs to 629 residues: Probable potassium transport system protein Kup 3 (629 aa).

12 helical membrane passes run 20–40 (LSLSALGIVYGDIGTSPLYTF), 61–81 (VSLIIWTLIIIASVKYIHFAL), 106–126 (PFIIAVGLMGAALIYGDGTIT), 143–163 (PSLKYYVLPIAITILITLFAI), 171–191 (IGKAFGPVMAFWFLTIGILGA), 209–229 (GLSFLFSNGATGFFILCGVFL), 253–273 (WFGLAFPSLIFNYLGQAALVL), 291–311 (FLLPLIILSTVATIIASQAII), 343–363 (IYIGVVNWLLMLATLGLTIGF), 372–392 (AYGIAVSATMLCTTLLLFIAL), 400–420 (IITSGLVAGLFMIVDASFFAA), and 425–445 (FINGGYIPITLAIIIYSMMYI).

This sequence belongs to the HAK/KUP transporter (TC 2.A.72) family.

It is found in the cell inner membrane. The catalysed reaction is K(+)(in) + H(+)(in) = K(+)(out) + H(+)(out). In terms of biological role, transport of potassium into the cell. Likely operates as a K(+):H(+) symporter. The chain is Probable potassium transport system protein Kup 3 from Legionella pneumophila subsp. pneumophila (strain Philadelphia 1 / ATCC 33152 / DSM 7513).